The primary structure comprises 505 residues: T-cell activation GTPase-activating protein 1 (505 aa).

Disordered stretches follow at residues 81 to 147 (DDSL…SESS), 160 to 212 (QQDR…DPFT), 242 to 293 (QGHI…QREI), 311 to 339 (RTSS…SQLS), and 414 to 441 (KPST…HRLS). Polar residues predominate over residues 90 to 102 (SDVSTLQNDSAYD). Over residues 203–212 (EGDEAEDPFT) the composition is skewed to acidic residues. Over residues 250 to 262 (SRSSPGESLGSSP) the composition is skewed to low complexity. 2 stretches are compositionally biased toward basic and acidic residues: residues 283–292 (KTDKTKPQRE) and 318–336 (EKSK…RKES).

This chain is T-cell activation GTPase-activating protein 1 (Tagap1), found in Mus musculus (Mouse).